Reading from the N-terminus, the 199-residue chain is Imidazoleglycerol-phosphate dehydratase (199 aa).

The protein belongs to the imidazoleglycerol-phosphate dehydratase family.

Its subcellular location is the cytoplasm. It catalyses the reaction D-erythro-1-(imidazol-4-yl)glycerol 3-phosphate = 3-(imidazol-4-yl)-2-oxopropyl phosphate + H2O. It participates in amino-acid biosynthesis; L-histidine biosynthesis; L-histidine from 5-phospho-alpha-D-ribose 1-diphosphate: step 6/9. This Acidithiobacillus ferrooxidans (strain ATCC 53993 / BNL-5-31) (Leptospirillum ferrooxidans (ATCC 53993)) protein is Imidazoleglycerol-phosphate dehydratase.